A 95-amino-acid polypeptide reads, in one-letter code: DNA-directed RNA polymerase subunit Rpo6 (95 aa).

The protein belongs to the archaeal Rpo6/eukaryotic RPB6 RNA polymerase subunit family. As to quaternary structure, part of the 13-subunit RNA polymerase complex.

It is found in the cytoplasm. It catalyses the reaction RNA(n) + a ribonucleoside 5'-triphosphate = RNA(n+1) + diphosphate. DNA-dependent RNA polymerase (RNAP) catalyzes the transcription of DNA into RNA using the four ribonucleoside triphosphates as substrates. The chain is DNA-directed RNA polymerase subunit Rpo6 from Saccharolobus solfataricus (strain ATCC 35092 / DSM 1617 / JCM 11322 / P2) (Sulfolobus solfataricus).